The following is a 269-amino-acid chain: tRNA pseudouridine synthase A (269 aa).

Aspartate 51 (nucleophile) is an active-site residue. Position 109 (tyrosine 109) interacts with substrate.

The protein belongs to the tRNA pseudouridine synthase TruA family. In terms of assembly, homodimer.

The catalysed reaction is uridine(38/39/40) in tRNA = pseudouridine(38/39/40) in tRNA. In terms of biological role, formation of pseudouridine at positions 38, 39 and 40 in the anticodon stem and loop of transfer RNAs. The protein is tRNA pseudouridine synthase A of Histophilus somni (strain 2336) (Haemophilus somnus).